We begin with the raw amino-acid sequence, 628 residues long: (+)-alpha pinene synthase 1, chloroplastic (628 aa).

3 residues coordinate Mg(2+): Asp-379, Asp-383, and Asp-531. The short motif at 379–383 is the DDXXD motif element; the sequence is DDIYD.

Belongs to the terpene synthase family. Tpsd subfamily. Mg(2+) is required as a cofactor. Mn(2+) serves as cofactor.

Its subcellular location is the plastid. It is found in the chloroplast. It carries out the reaction (2E)-geranyl diphosphate = (1R,5R)-alpha-pinene + diphosphate. It functions in the pathway terpene metabolism; oleoresin biosynthesis. It participates in secondary metabolite biosynthesis; terpenoid biosynthesis. Its function is as follows. Monoterpene synthase (TPS) involved in the biosynthesis of monoterpene natural products included in conifer oleoresin secretions and volatile emissions; these compounds contribute to biotic and abiotic stress defense against herbivores and pathogens. Catalyzes the conversion of (2E)-geranyl diphosphate (GPP) to (+)-alpha-pinene. The protein is (+)-alpha pinene synthase 1, chloroplastic of Pinus contorta (Shore pine).